The primary structure comprises 787 residues: Phenylalanine--tRNA ligase beta subunit (787 aa).

The region spanning 38 to 151 is the tRNA-binding domain; that stretch reads GQDPAPFVVA…SDYEVGDSFF (114 aa). The 78-residue stretch at 397-474 folds into the B5 domain; it reads SEGRVISFNP…RMHGYDKVQE (78 aa). Mg(2+) is bound by residues Asp-452, Asp-458, Glu-461, and Glu-462. The FDX-ACB domain occupies 694-785; that stretch reads HKYQPVKRDF…VAQKLGGELR (92 aa).

The protein belongs to the phenylalanyl-tRNA synthetase beta subunit family. Type 1 subfamily. As to quaternary structure, tetramer of two alpha and two beta subunits. Mg(2+) is required as a cofactor.

It is found in the cytoplasm. It carries out the reaction tRNA(Phe) + L-phenylalanine + ATP = L-phenylalanyl-tRNA(Phe) + AMP + diphosphate + H(+). In Anaplasma marginale (strain St. Maries), this protein is Phenylalanine--tRNA ligase beta subunit.